Reading from the N-terminus, the 305-residue chain is Protoheme IX farnesyltransferase (305 aa).

A run of 9 helical transmembrane segments spans residues 38 to 58 (FITT…SFLG), 60 to 80 (LDIV…SCAI), 110 to 130 (AYAF…MTTV), 131 to 151 (TSAV…TMWS), 161 to 181 (IGSV…TGTI), 185 to 205 (AWVL…SLAI), 227 to 247 (VTKR…FFLG), 249 to 269 (LGWP…VIGL), and 285 to 305 (FVYS…ITLF).

Belongs to the UbiA prenyltransferase family. Protoheme IX farnesyltransferase subfamily. As to quaternary structure, interacts with CtaA.

The protein localises to the cell membrane. The enzyme catalyses heme b + (2E,6E)-farnesyl diphosphate + H2O = Fe(II)-heme o + diphosphate. It functions in the pathway porphyrin-containing compound metabolism; heme O biosynthesis; heme O from protoheme: step 1/1. Converts heme B (protoheme IX) to heme O by substitution of the vinyl group on carbon 2 of heme B porphyrin ring with a hydroxyethyl farnesyl side group. This Bacillus pumilus (strain SAFR-032) protein is Protoheme IX farnesyltransferase.